A 544-amino-acid chain; its full sequence is MVSLLRCQSFKPSSIICSLALSAAFALSGTAFADESKPAENKPATPVVSPPKATAPSANKTQVRFTKTGTFDGDSVVKLARKLASKPYVVLKDPMPAGLAKLTYDEYRDIRFNPVSSIWRDQGLPFQMQMFHRGFYFQDLIEIAIVEANQATHLAYEPKYFTAGEVITQALPNDDIGYSGFRIHNQLNTNGVFDELMVFQGASYFRALGKGNAYGLSARGLALKTADPEGEEFPIFRAFWVERPSYDSNLIVVHALLDSPSVAGAYRFSVRPGDNTQIDVEATLFPRVELSKVGLAPSTSMFLHSLNGRHDTDDFRPEVHDSDGLLMFNGRGEHLWRPLANPRQLQVSAFSDNSPQGFGLIQRERNYASYQDLEAQYERRPSLWIEPVGNWGQGAVVLTEIPTESEIHDNIVSFWKPRQPIPAGSEYHFAYRMSWGDEPVAKTNSVVVSRTASGRADIAKATPRRLFVVDYHLNGTMPDELPLAKVESSGGVISNVVIARNAANNGYRLAFELEPEDKDLIELRAELKFSTPRQVETWLYRWTL.

An N-terminal signal peptide occupies residues 1–33 (MVSLLRCQSFKPSSIICSLALSAAFALSGTAFA). Residues 36 to 58 (SKPAENKPATPVVSPPKATAPSA) form a disordered region.

Belongs to the OpgD/OpgG family.

The protein localises to the periplasm. The protein operates within glycan metabolism; osmoregulated periplasmic glucan (OPG) biosynthesis. Involved in the biosynthesis of osmoregulated periplasmic glucans (OPGs). The protein is Glucans biosynthesis protein G 1 (opgG1) of Shewanella oneidensis (strain ATCC 700550 / JCM 31522 / CIP 106686 / LMG 19005 / NCIMB 14063 / MR-1).